Reading from the N-terminus, the 378-residue chain is Carbazole 1,9a-dioxygenase, terminal oxygenase component CarAa (378 aa).

A Rieske domain is found at 29–135; that stretch reads WYPVRLASEI…VEEAKGLIFV (107 aa). Positions 69, 71, 90, and 93 each coordinate [2Fe-2S] cluster.

As to quaternary structure, homotrimer. Carbazole 1,9a-dioxygenase complex consists of a terminal oxygenase component CarAa, a ferredoxin reductase component fdr and a ferredoxin component CarAc. It depends on [2Fe-2S] cluster as a cofactor.

It carries out the reaction 9H-carbazole + NADH + O2 + H(+) = 2'-aminobiphenyl-2,3-diol + NAD(+). The catalysed reaction is 9H-carbazole + NADPH + O2 + H(+) = 2'-aminobiphenyl-2,3-diol + NADP(+). Part of the multicomponent carbazole 1,9a-dioxygenase (CARDO), that converts carbazole (CAR) into 2-aminobiphenyl-2,3-diol. Catalyzes the dioxygenation at the angular (C-9a) and adjacent (C-1) positions of carbazole to yield a highly unstable cis-hydrodiol intermediate which is spontaneously converted to 2-aminobiphenyl-2,3-diol. In Sphingomonas sp, this protein is Carbazole 1,9a-dioxygenase, terminal oxygenase component CarAa (carAa).